A 115-amino-acid polypeptide reads, in one-letter code: Large ribosomal subunit protein bL19 (115 aa).

Belongs to the bacterial ribosomal protein bL19 family.

This protein is located at the 30S-50S ribosomal subunit interface and may play a role in the structure and function of the aminoacyl-tRNA binding site. The chain is Large ribosomal subunit protein bL19 from Lactobacillus acidophilus (strain ATCC 700396 / NCK56 / N2 / NCFM).